A 324-amino-acid polypeptide reads, in one-letter code: Probable 6-phosphogluconolactonase 4, chloroplastic (324 aa).

The transit peptide at 1-63 directs the protein to the chloroplast; that stretch reads MSVSAAVAAA…PAMATDGAAA (63 aa). The disordered stretch occupies residues 19–43; it reads ARHRSPPASRVAATSRGRPFSSGPH.

The protein belongs to the glucosamine/galactosamine-6-phosphate isomerase family. 6-phosphogluconolactonase subfamily.

It localises to the plastid. The protein resides in the chloroplast. It catalyses the reaction 6-phospho-D-glucono-1,5-lactone + H2O = 6-phospho-D-gluconate + H(+). Its pathway is carbohydrate degradation; pentose phosphate pathway; D-ribulose 5-phosphate from D-glucose 6-phosphate (oxidative stage): step 2/3. In terms of biological role, hydrolysis of 6-phosphogluconolactone to 6-phosphogluconate. This chain is Probable 6-phosphogluconolactonase 4, chloroplastic, found in Oryza sativa subsp. japonica (Rice).